We begin with the raw amino-acid sequence, 359 residues long: Probable 2-oxoacid dependent dioxygenase (359 aa).

The region spanning 207–308 (KGLWMLCHCF…ISVACFFVHT (102 aa)) is the Fe2OG dioxygenase domain. Positions 231, 233, and 287 each coordinate Fe cation. The interval 329-359 (PPKYRDTTSESSNHYVARKPNGNSSLDHLRI) is disordered. Positions 349–359 (NGNSSLDHLRI) are enriched in polar residues.

The protein belongs to the iron/ascorbate-dependent oxidoreductase family. Fe(2+) is required as a cofactor. In terms of tissue distribution, expressed in leaves and seeds. All cultivars with seed-only-functional allele have low to non-detectable GSL-OH expression in the leaves.

It carries out the reaction gluconapin + AH2 + O2 = progoitrin + A + H2O. Its function is as follows. Necessary for the hydroxylation of but-3-enyl glucosinolate to 2-hydroxybut-3-enyl glucosinolate, which is toxic to insects, bacteria and nematodes, inhibits seed germination and produces bitter flavors. In Arabidopsis thaliana (Mouse-ear cress), this protein is Probable 2-oxoacid dependent dioxygenase.